Consider the following 199-residue polypeptide: Fe/S biogenesis protein NfuA (199 aa).

[4Fe-4S] cluster contacts are provided by Cys151 and Cys154.

Belongs to the NfuA family. In terms of assembly, homodimer. The cofactor is [4Fe-4S] cluster.

Its function is as follows. Involved in iron-sulfur cluster biogenesis. Binds a 4Fe-4S cluster, can transfer this cluster to apoproteins, and thereby intervenes in the maturation of Fe/S proteins. Could also act as a scaffold/chaperone for damaged Fe/S proteins. The protein is Fe/S biogenesis protein NfuA of Xylella fastidiosa (strain M12).